We begin with the raw amino-acid sequence, 150 residues long: Nucleoside diphosphate kinase (150 aa).

ATP is bound by residues Lys-9, Phe-57, Arg-85, Thr-91, Arg-102, and Asn-112. Catalysis depends on His-115, which acts as the Pros-phosphohistidine intermediate.

The protein belongs to the NDK family. As to quaternary structure, homotetramer. Mg(2+) is required as a cofactor.

It localises to the cytoplasm. The catalysed reaction is a 2'-deoxyribonucleoside 5'-diphosphate + ATP = a 2'-deoxyribonucleoside 5'-triphosphate + ADP. The enzyme catalyses a ribonucleoside 5'-diphosphate + ATP = a ribonucleoside 5'-triphosphate + ADP. Its function is as follows. Major role in the synthesis of nucleoside triphosphates other than ATP. The ATP gamma phosphate is transferred to the NDP beta phosphate via a ping-pong mechanism, using a phosphorylated active-site intermediate. This Staphylococcus carnosus (strain TM300) protein is Nucleoside diphosphate kinase.